The primary structure comprises 333 residues: Cap-specific mRNA (nucleoside-2'-O-)-methyltransferase (333 aa).

Residue Y22 coordinates mRNA. Residues Q39, Y66, G68, G72, D95, R97, V116, and D138 each coordinate S-adenosyl-L-methionine. Residues 169-249 (PVASSLKWRC…NKIVRNKVVV (81 aa)) are binding to NPH-I. The interval 169–333 (PVASSLKWRC…NSKRSVRSNK (165 aa)) is binding to Rap94. K175 serves as the catalytic For methyltransferase activity. Residues 177 to 180 (RCPF), D182, 205 to 207 (SAE), and E233 each bind mRNA. The segment at 305-333 (SHEPIQRKISSKNSMSKNRNSKRSVRSNK) is disordered. The span at 311–322 (RKISSKNSMSKN) shows a compositional bias: low complexity. Residues 323–333 (RNSKRSVRSNK) are compositionally biased toward basic residues.

The protein belongs to the class I-like SAM-binding methyltransferase superfamily. Poxvirus/kinetoplastid 2'-O-MTase family. In terms of assembly, interacts with poly(A) polymerase catalytic subunit OPG063. Interacts with OPG109 and OPG123; these interactions might help linking transcription to capping and polyadenylation.

It localises to the virion. It catalyses the reaction a 5'-end (N(7)-methyl 5'-triphosphoguanosine)-ribonucleoside in mRNA + S-adenosyl-L-methionine = a 5'-end (N(7)-methyl 5'-triphosphoguanosine)-(2'-O-methyl-ribonucleoside) in mRNA + S-adenosyl-L-homocysteine + H(+). Functionally, displays methyltransferase, positive regulation of the poly(A) polymerase and transcription elongation activities. Involved in the modification of both mRNA ends and in intermediate and late gene positive transcription elongation. At the mRNAs 5' end, methylates the ribose 2' OH group of the first transcribed nucleotide, thereby producing a 2'-O-methylpurine cap. At the 3' end, functions as a processivity factor which stimulates the activity of the viral poly(A) polymerase OPG063 that creates mRNA's poly(A) tail. In the presence of OPG102, OPG063 does not dissociate from the RNA allowing tail elongation to around 250 adenylates. The sequence is that of Cap-specific mRNA (nucleoside-2'-O-)-methyltransferase (OPG102) from Vaccinia virus (strain Western Reserve) (VACV).